The sequence spans 512 residues: Norfluorocurarine oxidase (512 aa).

Residues 3–23 traverse the membrane as a helical segment; sequence LLLNPSLFSLLPLLLFIIFLF. C453 lines the heme pocket.

Belongs to the cytochrome P450 family. Heme is required as a cofactor.

The protein localises to the membrane. The catalysed reaction is norfluorocurarine + reduced [NADPH--hemoprotein reductase] + O2 = 18-hydroxynorfluorocurarine + oxidized [NADPH--hemoprotein reductase] + H2O + H(+). The protein operates within alkaloid biosynthesis. Monooxygenase involved in the biosynthesis of curare monoterpene indole alkaloids (MIAs), natural products such as diaboline, a pharmacologically active compound used to regulate blood pressure. Curare alkaloids act as animal glycine receptor antagonists. Catalyzes the conversion of norfluorocurarine to 18-OH norfluorocurarine. This Strychnos sp protein is Norfluorocurarine oxidase.